Reading from the N-terminus, the 322-residue chain is Undecaprenyl-phosphate 4-deoxy-4-formamido-L-arabinose transferase (322 aa).

Over 1–235 the chain is Cytoplasmic; the sequence is MFEIHPVKKV…TCLTTTPLRM (235 aa). The chain crosses the membrane as a helical span at residues 236-256; the sequence is LSLLGSIIAIGGFSIAVLLVI. The Periplasmic segment spans residues 257-269; sequence LRLTFGPQWAAEG. A helical transmembrane segment spans residues 270–290; it reads VFMLFAVLFTFIGAQFIGMGL. Over 291–322 the chain is Cytoplasmic; it reads LGEYIGRIYTDVRARPRYFVQQVIRPSSKENE.

Belongs to the glycosyltransferase 2 family.

The protein localises to the cell inner membrane. The catalysed reaction is UDP-4-deoxy-4-formamido-beta-L-arabinose + di-trans,octa-cis-undecaprenyl phosphate = 4-deoxy-4-formamido-alpha-L-arabinopyranosyl di-trans,octa-cis-undecaprenyl phosphate + UDP. The protein operates within glycolipid biosynthesis; 4-amino-4-deoxy-alpha-L-arabinose undecaprenyl phosphate biosynthesis; 4-amino-4-deoxy-alpha-L-arabinose undecaprenyl phosphate from UDP-4-deoxy-4-formamido-beta-L-arabinose and undecaprenyl phosphate: step 1/2. It functions in the pathway bacterial outer membrane biogenesis; lipopolysaccharide biosynthesis. Its function is as follows. Catalyzes the transfer of 4-deoxy-4-formamido-L-arabinose from UDP to undecaprenyl phosphate. The modified arabinose is attached to lipid A and is required for resistance to polymyxin and cationic antimicrobial peptides. This Shigella sonnei (strain Ss046) protein is Undecaprenyl-phosphate 4-deoxy-4-formamido-L-arabinose transferase.